The following is a 178-amino-acid chain: UPF0302 protein BCAH187_A1683 (178 aa).

It belongs to the UPF0302 family.

The chain is UPF0302 protein BCAH187_A1683 from Bacillus cereus (strain AH187).